The chain runs to 2207 residues: MPSRKPSKYGNKFRSGAASFNPKRTKTVEFSSLRSSEATSQDEKFEAIRLANSIDESLGFPRFEAGEKRVGWLINMHSTSIEDPNVPGGRAGVDYYFLDDDGGSFKATVEYDPYFLIAVKTGHEAEVEEWCRRMFEGLIKKIKRVVKEDLKLPNHLLGHRRTFLQLDFANVSHLLEVRKTLLPLAEKNRKNARPNGTTNASDFIIDIREYDVPYHVRVAIDKDIRIGKWYTVEATHGIISLTCLEERLTRADPVVLAFDIETTKLPLKFPDSVIDQIMMISYMIDGQGFLITNREIVSEDIDDFEYTPKPEYSGPFMIFNEPNERAVIERFFEHIKEAKPTVIATYNGDFFDWPFVEARASVLGIDMYKEIGFRKNSEDIYQSDHCAHMDCFAWVNRDSYLPQGSRGLKAVTVAKLGYDPDELDPELMTPYASERPQTLAEYSVSDAVATYYLYMKYIHPFIFSLCTILPLNPDDTLRKGTGTLCEMLLMVQAYKGNIVLPNKHKDPPEAFYEGHLLESETYVGGHVESIEAGVFRSDIPVPFNIDPTAVDELLRDLDAALKFSIEVEEKKSLDDVTNYEEVKGQIAKLLTDLRENPHRNEVPFIYHLDVASMYPNIMITNRLQPDSLIQESNCAACDFNRPGKTCDRRLPWAWRGEFLPAKRDEYNMIRQAVQNERFPGRTKKSPMRAFTELSAEEQAAIVKKRLQDYSKKIYHKIHDSKTMVREAIICQRENPFYVDTVRSFRDRRYDFKGKQKVWKGKTESLKSSGAPAAEIEEAKKMIVLYDSLQLAHKVILNSFYGYVMRKGSRWYSMEMAGVTCLTGARIIQMARELVERIGRPLELDTDGIWCMLPGTFPENFSFTLKNGKKLGISYPCVMLNHLVHGSYTNHQYQSLANPATFRYETHSENSIFFEVDGPYRAMILPTSKEEDKNLKKRYAVFNDDGSLAELKGFEVKRRGELKLIKIFQTQIFKFFLEGTTLAETYAAVARVADRWLDVLYEHGATLADEELIELISENRSMTKTLEEYGNQKSTSITTARRLAEFLGEQMVKDKGLNCKYIISARPRNTPVTERAIPVTIFSAEDSIKRHFLRKWLKDDPGDMDPRSVIDWDYYLERLGSVVQKLITIPAALQKIRNPVPRVAHPEWLQRRINKQDDRFKQVKMTDMFGKSEKNPLSDISTNIIDHRVQHADNLDEAMADSMEKLKSSSPQKASGKRKHPENQTKTSLDPFASLPAKMPSIDDDYVGFLKYQKQKWKIQKQARLRRRQLFGERANTGGDSLSHLFRNQAELLYISTWQVLQLAETSRPGIVRAFVLIDRKIHALTIKVPRCVYINLKQDSLPDVEVPECEVEKVNHTLPNGHPSVHLFKLTLSEETFLREADKIHVLLQHPSVEGVYERNIPLNLRAVLKLGSICTFDEAQRGVLGDGLERGFDLSTLCRTSSEQQYLQDSPLAYHFLYHVSSGEKQIFAIFSSTKNEAHIVILNRARDVQGLPNVDKIYSELLARKLQGQGDQAEGAFQYQEKIHFRTTQITTRRKAYLEVSDLIKKLRNDESLPAIMIIQSQQRSRLCHDIPILKEYPILSVKPEVSDMNLPPLGWQSFIAKRLVTHYLYLSSWVQHLTMLARYGDVPLCNLESDDPRFLIDISYARRLQQNNVVLWWSSTAKPDHAGYEKDDITGPLERVGMPCVNVPGSYTTVCVELEVRNLAINTILTSSIINEAEGADSLLAPSDPSAESSGSGVLYSEKAFASAGAVVLREMVKHWWSEACQGNNMADIMVQHLIRWVESPASCLYDRSLHQYVRMLSRKSFQQLMAEFRRVGSNVVFASPTRLLLQTSKTEVGNAYAYSQYVLKSIRANPSFHFIDLDIKEYWDYLVWYDEYNYGGKGCQEVAETEEQPLETVMHWQLSRFLPTPMQTIFHDWVVEYIELMHSFKRPESDDSSTPRLTQIPIGQPEPGQENEELSAALSDRFSKPLKKQISGLIRRQREELLHPELASDYVFPILPGVLTDPNEEKRNPVLELVKLLMQVLSLSKTTALETRLLRRELLALFEVREFSKEGRFENPGSSLKIPELTCSACCLIRDLDLCRDEDVLPERGSGSGPDSATSSRPWCCPFCQTEYDRLAQEEMLIGQVWGMVVAWQTQDLKCSKCGTLKISEFMEHCSCSGQWTETMNRADIEKRLKVLESVAKFHELKLLQVVVEEVLSQT.

Disordered regions lie at residues 1-20, 1201-1233, and 1934-1961; these read MPSRKPSKYGNKFRSGAASF, SMEKLKSSSPQKASGKRKHPENQTKTSLDPFAS, and RPESDDSSTPRLTQIPIGQPEPGQENEE. Zn(2+)-binding residues include cysteine 2075, cysteine 2078, cysteine 2113, and cysteine 2116. The segment at 2075 to 2116 adopts a CysA-type zinc-finger fold; it reads CSACCLIRDLDLCRDEDVLPERGSGSGPDSATSSRPWCCPFC. [4Fe-4S] cluster is bound by residues cysteine 2147, cysteine 2150, cysteine 2162, and cysteine 2164. Residues 2147–2164 carry the CysB motif motif; sequence CSKCGTLKISEFMEHCSC.

It belongs to the DNA polymerase type-B family. In terms of assembly, heterotetramer. Consists of 4 subunits: pol2, dpb2, dpb3 and dpb4. [4Fe-4S] cluster serves as cofactor.

The protein resides in the nucleus. It carries out the reaction DNA(n) + a 2'-deoxyribonucleoside 5'-triphosphate = DNA(n+1) + diphosphate. DNA polymerase II participates in chromosomal DNA replication. The protein is DNA polymerase epsilon catalytic subunit A (pol2) of Emericella nidulans (strain FGSC A4 / ATCC 38163 / CBS 112.46 / NRRL 194 / M139) (Aspergillus nidulans).